Here is a 309-residue protein sequence, read N- to C-terminus: Porphobilinogen deaminase (309 aa).

Position 243 is an S-(dipyrrolylmethanemethyl)cysteine (Cys-243).

The protein belongs to the HMBS family. In terms of assembly, monomer. Dipyrromethane is required as a cofactor.

It carries out the reaction 4 porphobilinogen + H2O = hydroxymethylbilane + 4 NH4(+). The protein operates within porphyrin-containing compound metabolism; protoporphyrin-IX biosynthesis; coproporphyrinogen-III from 5-aminolevulinate: step 2/4. Tetrapolymerization of the monopyrrole PBG into the hydroxymethylbilane pre-uroporphyrinogen in several discrete steps. This is Porphobilinogen deaminase from Deinococcus geothermalis (strain DSM 11300 / CIP 105573 / AG-3a).